We begin with the raw amino-acid sequence, 392 residues long: Chaperone protein DnaJ (392 aa).

The 66-residue stretch at 2–67 (DYYTILGVAK…QKRESYDRYG (66 aa)) folds into the J domain. A CR-type zinc finger spans residues 149–227 (GVEKELLVSG…CRGQGRIKDK (79 aa)). Zn(2+)-binding residues include cysteine 162, cysteine 165, cysteine 179, cysteine 182, cysteine 201, cysteine 204, cysteine 215, and cysteine 218. CXXCXGXG motif repeat units lie at residues 162 to 169 (CDACSGSG), 179 to 186 (CDRCKGSG), 201 to 208 (CPDCSGEG), and 215 to 222 (CSECRGQG).

The protein belongs to the DnaJ family. As to quaternary structure, homodimer. Requires Zn(2+) as cofactor.

The protein resides in the cytoplasm. In terms of biological role, participates actively in the response to hyperosmotic and heat shock by preventing the aggregation of stress-denatured proteins and by disaggregating proteins, also in an autonomous, DnaK-independent fashion. Unfolded proteins bind initially to DnaJ; upon interaction with the DnaJ-bound protein, DnaK hydrolyzes its bound ATP, resulting in the formation of a stable complex. GrpE releases ADP from DnaK; ATP binding to DnaK triggers the release of the substrate protein, thus completing the reaction cycle. Several rounds of ATP-dependent interactions between DnaJ, DnaK and GrpE are required for fully efficient folding. Also involved, together with DnaK and GrpE, in the DNA replication of plasmids through activation of initiation proteins. This Chlamydia muridarum (strain MoPn / Nigg) protein is Chaperone protein DnaJ.